A 191-amino-acid polypeptide reads, in one-letter code: Adenylate cyclase CyaB (191 aa).

The CYTH domain maps to 9–180; that stretch reads RFEVEFKYRL…TRSYRTLCEQ (172 aa). Tyrosine 46 (proton acceptor) is an active-site residue.

Belongs to the adenylyl cyclase CyaB family.

Its subcellular location is the cytoplasm. It carries out the reaction ATP = 3',5'-cyclic AMP + diphosphate. Its activity is regulated as follows. Inhibited by GTP. Its function is as follows. In vitro, CyaB catalyzes the biosynthesis of cyclic AMP (cAMP) from ATP. It seems that under the physiological conditions CyaB has no function in cAMP processes. In vitro, it is also able to hydrolyze substrates such as thiamine triphosphate (ThTP) and inorganic triphosphate (PPPi) at a low rate. It has a slight preference for ThTP over ATP and PPPi in the presence of manganese ions. This PPPase activity is probably not of physiological importance. This is Adenylate cyclase CyaB (cyaB) from Aeromonas hydrophila.